A 49-amino-acid polypeptide reads, in one-letter code: Small ribosomal subunit protein eS31 (49 aa).

Residues Cys21, Cys24, Cys39, and Cys42 each contribute to the Zn(2+) site. The C4-type zinc finger occupies 21–42 (CPRCGNGVFLAEHEDRMSCGRC).

Belongs to the eukaryotic ribosomal protein eS31 family. Part of the 30S ribosomal subunit. Zn(2+) serves as cofactor.

This chain is Small ribosomal subunit protein eS31, found in Methanothrix thermoacetophila (strain DSM 6194 / JCM 14653 / NBRC 101360 / PT) (Methanosaeta thermophila).